The following is a 324-amino-acid chain: Glyoxylate/hydroxypyruvate reductase B (324 aa).

Active-site residues include R237 and E266. H285 functions as the Proton donor in the catalytic mechanism.

Belongs to the D-isomer specific 2-hydroxyacid dehydrogenase family. GhrB subfamily. In terms of assembly, homodimer.

The protein localises to the cytoplasm. It carries out the reaction glycolate + NADP(+) = glyoxylate + NADPH + H(+). The catalysed reaction is (R)-glycerate + NAD(+) = 3-hydroxypyruvate + NADH + H(+). It catalyses the reaction (R)-glycerate + NADP(+) = 3-hydroxypyruvate + NADPH + H(+). In terms of biological role, catalyzes the NADPH-dependent reduction of glyoxylate and hydroxypyruvate into glycolate and glycerate, respectively. The polypeptide is Glyoxylate/hydroxypyruvate reductase B (Enterobacter sp. (strain 638)).